A 176-amino-acid chain; its full sequence is 3-hydroxydecanoyl-[acyl-carrier-protein] dehydratase (176 aa).

Histidine 71 is a catalytic residue.

Belongs to the thioester dehydratase family. FabA subfamily. Homodimer.

The protein localises to the cytoplasm. It catalyses the reaction a (3R)-hydroxyacyl-[ACP] = a (2E)-enoyl-[ACP] + H2O. The catalysed reaction is (3R)-hydroxydecanoyl-[ACP] = (2E)-decenoyl-[ACP] + H2O. The enzyme catalyses (2E)-decenoyl-[ACP] = (3Z)-decenoyl-[ACP]. The protein operates within lipid metabolism; fatty acid biosynthesis. In terms of biological role, necessary for the introduction of cis unsaturation into fatty acids. Catalyzes the dehydration of (3R)-3-hydroxydecanoyl-ACP to E-(2)-decenoyl-ACP and then its isomerization to Z-(3)-decenoyl-ACP. Can catalyze the dehydratase reaction for beta-hydroxyacyl-ACPs with saturated chain lengths up to 16:0, being most active on intermediate chain length. In Rhodopseudomonas palustris (strain HaA2), this protein is 3-hydroxydecanoyl-[acyl-carrier-protein] dehydratase.